A 121-amino-acid chain; its full sequence is DNA-directed RNA polymerase subunit Rpo8 (121 aa).

The protein belongs to the archaeal Rpo8 RNA polymerase subunit family. As to quaternary structure, part of the 13-subunit RNA polymerase complex. Post-translationally, this subunit is phosphorylated.

The protein resides in the cytoplasm. The catalysed reaction is RNA(n) + a ribonucleoside 5'-triphosphate = RNA(n+1) + diphosphate. Its function is as follows. DNA-dependent RNA polymerase (RNAP) catalyzes the transcription of DNA into RNA using the four ribonucleoside triphosphates as substrates. This Sulfolobus acidocaldarius (strain ATCC 33909 / DSM 639 / JCM 8929 / NBRC 15157 / NCIMB 11770) protein is DNA-directed RNA polymerase subunit Rpo8.